A 357-amino-acid chain; its full sequence is Uroporphyrinogen decarboxylase (357 aa).

Substrate contacts are provided by residues 27–31, D77, Y154, S209, and H330; that span reads RQAGR.

Belongs to the uroporphyrinogen decarboxylase family. Homodimer.

Its subcellular location is the cytoplasm. It carries out the reaction uroporphyrinogen III + 4 H(+) = coproporphyrinogen III + 4 CO2. It participates in porphyrin-containing compound metabolism; protoporphyrin-IX biosynthesis; coproporphyrinogen-III from 5-aminolevulinate: step 4/4. Catalyzes the decarboxylation of four acetate groups of uroporphyrinogen-III to yield coproporphyrinogen-III. The sequence is that of Uroporphyrinogen decarboxylase from Acinetobacter baumannii (strain ATCC 17978 / DSM 105126 / CIP 53.77 / LMG 1025 / NCDC KC755 / 5377).